The primary structure comprises 1059 residues: MTNSIASTKCLPNALSTGNYGMSQSHRYTDDSKEYIIVKLTDSAFRAIEEYQRDDNAKRLQPGQRAKIQFVGNTGVIQFPRPATDANGIPNANGNGSDATGAGGGGGRKFGFTINNMEGTLECVQQQQRSLGVLGAVTLRMRIHANEDVYDSTRTKMAIAEETEKSKCIREIKPNQSDIGRKVKKPPSAIQSSASTASAFSSNSSNSGLTTTAFHHHSNSNNSGNNNNRSSSSSNSFNSNNHSRKLGSSPFNGLGVGSSSSSSAFASRSPNPSTLGAIGTVNGSGVVGGRYGGGAASSLASTFANGISQGYHNLSGSSPRDSMTAGTSSATASSVISSRNKMPSGGLTSSNSNSSSSSRSANSKSSGGNKMSDVSRRNIRERLIHLLALKAFKKPELFARLKNEGIRDRERNQITNILMDISTMSHNTYNLRRQMWNDVDENWPFFSEQEVQQLKRRKPQNLTPPMSSDAGSSTSGQSPTSTHTGSPPPPSSNGGPGGVGSGAGGTSMKRTSLEYDETMFSTVQPKKQRISHYKKDTPPSGTSYSSAGVSMSLGSSGSSSRSRYTPPQRQPGPLDDHSTTDLSYNVLDNIVEFMSSTAAATQQSMEQQQHPRSNSSNNRRGSSSLAGTSNGGNNKDKRNSTGSNSSSSSGYETQQDRQRSTTPMSSNRSSASSSTTPPKLAASFVPAATSGSASGTSKQRMPPQQSDYNSYNSNNAQHVASNSKKRMGSVGPSGGSNGQRQRSASGSNSGYQQVPPPSSNSRSSIQQQNQHQKQQVQQKQAPSQQQQQQQQQYHQQAKHPSPSQQLAAAAHAYAHATADTDSSATPRYDFSQYVPIQTLEVRRRYKTEFESDYDEYRKLLTRVEDVRNRFQDLSERLESARRCDNGYGDYDHIKRQIVCEYERINNDRTIGEDKERFDYLHAKLAHIKQLVMDYDKTLMSATMAMAPTDVVAAQGPDPAVAKAAARLAEHHRRQHHAAETIKQQQQQKQTHQHHLQRHLQHHLQQQQNLLQQQQNLLQQQSVSNSDDSSDSSDSNDDDDDDDEDCDDSNSNTDDDEARY.

Disordered stretches follow at residues 171–277, 314–374, 450–509, 522–581, and 598–827; these read EIKP…TLGA, LSGS…MSDV, EVQQ…TSMK, TVQP…STTD, and AAAT…ATPR. Low complexity-rich tracts occupy residues 188 to 241, 258 to 273, 322 to 369, and 467 to 485; these read SAIQ…NSNN, SSSS…PNPS, SMTA…SGGN, and SSDA…THTG. Positions 494 to 505 are enriched in gly residues; sequence GGPGGVGSGAGG. The segment covering 543–562 has biased composition (low complexity); that stretch reads SYSSAGVSMSLGSSGSSSRS. Over residues 598 to 611 the composition is skewed to polar residues; that stretch reads AAATQQSMEQQQHP. Composition is skewed to low complexity over residues 612-624, 640-650, and 660-697; these read RSNS…GSSS, STGSNSSSSSG, and STTP…SGTS. Composition is skewed to polar residues over residues 698–707 and 738–751; these read KQRMPPQQSD and GQRQ…NSGY. Low complexity-rich tracts occupy residues 759–795 and 807–824; these read SNSR…QYHQ and AAAA…DSSA. Residues 827–939 enclose the OCEL domain; it reads RYDFSQYVPI…LVMDYDKTLM (113 aa). A coiled-coil region spans residues 853 to 883; the sequence is YDEYRKLLTRVEDVRNRFQDLSERLESARRC. The interval 968-1059 is disordered; that stretch reads AEHHRRQHHA…SNTDDDEARY (92 aa). Basic residues predominate over residues 990–1001; the sequence is THQHHLQRHLQH. The segment covering 1002–1026 has biased composition (low complexity); the sequence is HLQQQQNLLQQQQNLLQQQSVSNSD. Residues 1027–1059 are compositionally biased toward acidic residues; the sequence is DSSDSSDSNDDDDDDDEDCDDSNSNTDDDEARY.

This sequence belongs to the ELL/occludin family. As to quaternary structure, component of the super elongation complex (SEC), at least composed of Ell, Cdk9, cyclin-T (CycT), lilli and ear. Component of the little elongation complex, at least composed of Ell, Eaf, Ice1 and Ice2. Associates with RNA polymerase II.

It is found in the nucleus. It localises to the nucleolus. The protein resides in the chromosome. In terms of biological role, elongation factor component of the super elongation complex (SEC), a complex required to increase the catalytic rate of RNA polymerase II transcription by suppressing transient pausing by the polymerase at multiple sites along the DNA. Elongation factor component of the little elongation complex (LEC), a complex required to regulate small nuclear RNA (snRNA) gene transcription by RNA polymerase II and III. This chain is RNA polymerase II elongation factor Ell (Ell), found in Drosophila melanogaster (Fruit fly).